We begin with the raw amino-acid sequence, 285 residues long: Eukaryotic translation initiation factor 3 subunit J (285 aa).

2 disordered regions span residues 1 to 86 and 232 to 285; these read MSWD…QLDE and QARL…DDFM. Residues 22–41 show a composition bias toward acidic residues; that stretch reads WEDEEDDGPVLESWDVDPEE. Residues 36-81 are a coiled coil; that stretch reads DVDPEEEEKKKKEAKLQEAKRKAELKAKEDAEKAKKDAKRKELEQF. The segment covering 42–86 has biased composition (basic and acidic residues); it reads EEKKKKEAKLQEAKRKAELKAKEDAEKAKKDAKRKELEQFDQLDE. The segment covering 269-285 has biased composition (acidic residues); the sequence is DDMDDGQFDDLDDDDFM.

Belongs to the eIF-3 subunit J family. Component of the eukaryotic translation initiation factor 3 (eIF-3) complex.

The protein localises to the cytoplasm. In terms of biological role, component of the eukaryotic translation initiation factor 3 (eIF-3) complex, which is involved in protein synthesis of a specialized repertoire of mRNAs and, together with other initiation factors, stimulates binding of mRNA and methionyl-tRNAi to the 40S ribosome. The eIF-3 complex specifically targets and initiates translation of a subset of mRNAs involved in cell proliferation. This is Eukaryotic translation initiation factor 3 subunit J from Candida albicans (strain SC5314 / ATCC MYA-2876) (Yeast).